The chain runs to 293 residues: Ribosomal protein L11 methyltransferase (293 aa).

The S-adenosyl-L-methionine site is built by Thr146, Gly167, Asp189, and Asn230.

It belongs to the methyltransferase superfamily. PrmA family.

It is found in the cytoplasm. The enzyme catalyses L-lysyl-[protein] + 3 S-adenosyl-L-methionine = N(6),N(6),N(6)-trimethyl-L-lysyl-[protein] + 3 S-adenosyl-L-homocysteine + 3 H(+). Its function is as follows. Methylates ribosomal protein L11. This Colwellia psychrerythraea (strain 34H / ATCC BAA-681) (Vibrio psychroerythus) protein is Ribosomal protein L11 methyltransferase.